The chain runs to 530 residues: T-complex protein 1 subunit zeta-2 (530 aa).

Belongs to the TCP-1 chaperonin family. In terms of assembly, component of the chaperonin-containing T-complex (TRiC), a heterooligomeric complex of about 850 to 900 kDa that forms two stacked rings, 12 to 16 nm in diameter. As to expression, testis-specific.

The protein localises to the cytoplasm. Component of the chaperonin-containing T-complex (TRiC), a molecular chaperone complex that assists the folding of proteins upon ATP hydrolysis. In Homo sapiens (Human), this protein is T-complex protein 1 subunit zeta-2 (CCT6B).